A 649-amino-acid polypeptide reads, in one-letter code: Acetylcholinesterase (649 aa).

The signal sequence occupies residues 1–38 (MAISCRQSRVLPMSLPLPLTIPLPLVLVLSLHLSGVCG). An intrachain disulfide couples C104 to C131. Residues N126 and N174 are each glycosylated (N-linked (GlcNAc...) asparagine). S276 functions as the Acyl-ester intermediate in the catalytic mechanism. C330 and C345 are disulfide-bonded. N331 carries an N-linked (GlcNAc...) asparagine glycan. Residues E405 and H518 each act as charge relay system in the active site. Residues C480 and C598 are joined by a disulfide bond. N-linked (GlcNAc...) asparagine glycosylation is present at N531. The GPI-anchor amidated serine moiety is linked to residue S619. A propeptide spans 620–649 (GSASISPRLQLLGIAALIYICAALRTKRVF) (removed in mature form).

It belongs to the type-B carboxylesterase/lipase family. As to quaternary structure, homodimer; disulfide-linked. The active unit is formed by non-covalent association of the 55 kDa and 16 kDa subunits. In terms of processing, proteolytic cleavage into the 16 kDa subunit and the 55 kDa subunits originates from the hydrophilic peptide, aa 148-180, and is associated with excretion out of the cell. Post-translationally, neither N-glycosylation nor dimerization is required for enzyme activity or substrate specificity, but protects the protein against proteolytic digestion.

It localises to the synapse. The protein resides in the cell membrane. It catalyses the reaction acetylcholine + H2O = choline + acetate + H(+). Rapidly hydrolyzes choline released into the synapse. It can hydrolyze butyrylthiocholine. The chain is Acetylcholinesterase (Ace) from Drosophila melanogaster (Fruit fly).